The following is a 431-amino-acid chain: Enolase (431 aa).

Gln-167 serves as a coordination point for (2R)-2-phosphoglycerate. Glu-209 serves as the catalytic Proton donor. Mg(2+) contacts are provided by Asp-246, Glu-290, and Asp-317. The (2R)-2-phosphoglycerate site is built by Lys-342, Arg-371, Ser-372, and Lys-393. Lys-342 (proton acceptor) is an active-site residue.

It belongs to the enolase family. As to quaternary structure, component of the RNA degradosome, a multiprotein complex involved in RNA processing and mRNA degradation. It depends on Mg(2+) as a cofactor.

It is found in the cytoplasm. Its subcellular location is the secreted. The protein localises to the cell surface. It carries out the reaction (2R)-2-phosphoglycerate = phosphoenolpyruvate + H2O. The protein operates within carbohydrate degradation; glycolysis; pyruvate from D-glyceraldehyde 3-phosphate: step 4/5. Catalyzes the reversible conversion of 2-phosphoglycerate (2-PG) into phosphoenolpyruvate (PEP). It is essential for the degradation of carbohydrates via glycolysis. The sequence is that of Enolase from Yersinia pseudotuberculosis serotype O:1b (strain IP 31758).